We begin with the raw amino-acid sequence, 444 residues long: Cortexillin-1 (444 aa).

Positions 1–227 (MAGKDWEIVQ…VLYTSLFFHA (227 aa)) are actin-binding. Calponin-homology (CH) domains lie at 8–115 (IVQE…RKYR) and 124–229 (KSSE…HAYR). Coiled coils occupy residues 227–352 (AYRA…TRIR) and 410–434 (LATKLEAENLAIMKLLNQKEDDLKA).

It belongs to the cortexillin family. Homodimer; parallel.

It localises to the cytoplasm. Its subcellular location is the cytoskeleton. Functionally, actin-bundling protein. When linked to F-actin the actin filaments form preferentially anti-parallel bundles that associate into meshworks. Plays a major role in cytokinesis. Negatively regulates cortical localization of rapgap1. This is Cortexillin-1 (ctxA) from Dictyostelium discoideum (Social amoeba).